The chain runs to 228 residues: Geranylgeranylglyceryl phosphate synthase (228 aa).

Position 14 (Lys-14) interacts with sn-glycerol 1-phosphate. Asp-16 and Thr-42 together coordinate Mg(2+). Sn-glycerol 1-phosphate contacts are provided by residues 160-165 (YIEYSG), Gly-190, and 210-211 (GN).

Belongs to the GGGP/HepGP synthase family. Group I subfamily. The cofactor is Mg(2+).

It is found in the cytoplasm. It catalyses the reaction sn-glycerol 1-phosphate + (2E,6E,10E)-geranylgeranyl diphosphate = sn-3-O-(geranylgeranyl)glycerol 1-phosphate + diphosphate. It functions in the pathway membrane lipid metabolism; glycerophospholipid metabolism. In terms of biological role, prenyltransferase that catalyzes the transfer of the geranylgeranyl moiety of geranylgeranyl diphosphate (GGPP) to the C3 hydroxyl of sn-glycerol-1-phosphate (G1P). This reaction is the first ether-bond-formation step in the biosynthesis of archaeal membrane lipids. The sequence is that of Geranylgeranylglyceryl phosphate synthase from Methanocella arvoryzae (strain DSM 22066 / NBRC 105507 / MRE50).